Consider the following 475-residue polypeptide: Bifunctional protein HldE (475 aa).

Residues 1 to 318 (MKVTLPDFER…ENAVRGRAET (318 aa)) are ribokinase. 195–198 (NLSE) lines the ATP pocket. Aspartate 264 is an active-site residue. The segment at 344 to 475 (MTNGVFDILH…NIIKKIQKNS (132 aa)) is cytidylyltransferase.

In the N-terminal section; belongs to the carbohydrate kinase PfkB family. It in the C-terminal section; belongs to the cytidylyltransferase family. Homodimer.

It carries out the reaction D-glycero-beta-D-manno-heptose 7-phosphate + ATP = D-glycero-beta-D-manno-heptose 1,7-bisphosphate + ADP + H(+). The enzyme catalyses D-glycero-beta-D-manno-heptose 1-phosphate + ATP + H(+) = ADP-D-glycero-beta-D-manno-heptose + diphosphate. It functions in the pathway nucleotide-sugar biosynthesis; ADP-L-glycero-beta-D-manno-heptose biosynthesis; ADP-L-glycero-beta-D-manno-heptose from D-glycero-beta-D-manno-heptose 7-phosphate: step 1/4. Its pathway is nucleotide-sugar biosynthesis; ADP-L-glycero-beta-D-manno-heptose biosynthesis; ADP-L-glycero-beta-D-manno-heptose from D-glycero-beta-D-manno-heptose 7-phosphate: step 3/4. Its function is as follows. Catalyzes the phosphorylation of D-glycero-D-manno-heptose 7-phosphate at the C-1 position to selectively form D-glycero-beta-D-manno-heptose-1,7-bisphosphate. In terms of biological role, catalyzes the ADP transfer from ATP to D-glycero-beta-D-manno-heptose 1-phosphate, yielding ADP-D-glycero-beta-D-manno-heptose. This chain is Bifunctional protein HldE, found in Cronobacter sakazakii (strain ATCC BAA-894) (Enterobacter sakazakii).